We begin with the raw amino-acid sequence, 147 residues long: D-aminoacyl-tRNA deacylase (147 aa).

A Gly-cisPro motif, important for rejection of L-amino acids motif is present at residues 136-137 (GP).

The protein belongs to the DTD family. As to quaternary structure, homodimer.

It is found in the cytoplasm. It catalyses the reaction glycyl-tRNA(Ala) + H2O = tRNA(Ala) + glycine + H(+). The enzyme catalyses a D-aminoacyl-tRNA + H2O = a tRNA + a D-alpha-amino acid + H(+). In terms of biological role, an aminoacyl-tRNA editing enzyme that deacylates mischarged D-aminoacyl-tRNAs. Also deacylates mischarged glycyl-tRNA(Ala), protecting cells against glycine mischarging by AlaRS. Acts via tRNA-based rather than protein-based catalysis; rejects L-amino acids rather than detecting D-amino acids in the active site. By recycling D-aminoacyl-tRNA to D-amino acids and free tRNA molecules, this enzyme counteracts the toxicity associated with the formation of D-aminoacyl-tRNA entities in vivo and helps enforce protein L-homochirality. The polypeptide is D-aminoacyl-tRNA deacylase (Streptococcus pneumoniae (strain Taiwan19F-14)).